The sequence spans 841 residues: DNA mismatch repair protein MutS (841 aa).

Residue G596 to S603 participates in ATP binding.

The protein belongs to the DNA mismatch repair MutS family.

This protein is involved in the repair of mismatches in DNA. It is possible that it carries out the mismatch recognition step. This protein has a weak ATPase activity. The protein is DNA mismatch repair protein MutS of Acholeplasma laidlawii (strain PG-8A).